A 132-amino-acid polypeptide reads, in one-letter code: Fatty acid-binding protein, intestinal (132 aa).

Position 2 is an N-acetylalanine (alanine 2). Hexadecanoate is bound by residues tryptophan 83 and arginine 107. 2 residues coordinate tetradecanoate: tryptophan 83 and arginine 107.

The protein belongs to the calycin superfamily. Fatty-acid binding protein (FABP) family. Expressed in the small intestine. Highest expression levels in the proximal ileum.

The protein localises to the cytoplasm. Its function is as follows. FABPs are thought to play a role in the intracellular transport of long-chain fatty acids and their acyl-CoA esters. FABP2 is probably involved in triglyceride-rich lipoprotein synthesis. Binds saturated long-chain fatty acids with a high affinity, but binds with a lower affinity to unsaturated long-chain fatty acids. FABP2 may also help maintain energy homeostasis by functioning as a lipid sensor. The chain is Fatty acid-binding protein, intestinal (Fabp2) from Mus musculus (Mouse).